A 369-amino-acid chain; its full sequence is O-methyltransferase 12 (369 aa).

S-adenosyl-L-methionine-binding positions include Gly-181, Asp-204, 229 to 231, Asp-230, Phe-231, and Lys-244; that span reads GDF. His-248 acts as the Proton acceptor in catalysis.

The protein belongs to the class I-like SAM-binding methyltransferase superfamily. Cation-independent O-methyltransferase family. COMT subfamily.

The catalysed reaction is resorcinol + S-adenosyl-L-methionine = 3-methoxyphenol + S-adenosyl-L-homocysteine + H(+). Functionally, S-adenosyl-L-methionine dependent O-methyltransferase that may be involved in modifying resorcinol ring to synthesize a variant of 4-methyl-5-pentylbenzene-1,3-diol. The protein is O-methyltransferase 12 (omt12) of Dictyostelium discoideum (Social amoeba).